The sequence spans 130 residues: Methylglyoxal synthase (130 aa).

The 130-residue stretch at 1-130 (MSTPRIALIA…DLARRLPVKA (130 aa)) folds into the MGS-like domain. Substrate contacts are provided by residues H11, K15, 37–40 (TGTT), and 57–58 (SG). The active-site Proton donor/acceptor is the D63. H90 serves as a coordination point for substrate.

The protein belongs to the methylglyoxal synthase family.

The catalysed reaction is dihydroxyacetone phosphate = methylglyoxal + phosphate. In terms of biological role, catalyzes the formation of methylglyoxal from dihydroxyacetone phosphate. The protein is Methylglyoxal synthase of Burkholderia thailandensis (strain ATCC 700388 / DSM 13276 / CCUG 48851 / CIP 106301 / E264).